An 855-amino-acid chain; its full sequence is Valine--tRNA ligase (855 aa).

Residues 44-54 (PYPTGNFHIGN) carry the 'HIGH' region motif. A 'KMSKS' region motif is present at residues 522–526 (KMSKS). Lys525 contacts ATP.

This sequence belongs to the class-I aminoacyl-tRNA synthetase family. ValS type 2 subfamily.

The protein resides in the cytoplasm. It carries out the reaction tRNA(Val) + L-valine + ATP = L-valyl-tRNA(Val) + AMP + diphosphate. Its function is as follows. Catalyzes the attachment of valine to tRNA(Val). As ValRS can inadvertently accommodate and process structurally similar amino acids such as threonine, to avoid such errors, it has a 'posttransfer' editing activity that hydrolyzes mischarged Thr-tRNA(Val) in a tRNA-dependent manner. This Methanothrix thermoacetophila (strain DSM 6194 / JCM 14653 / NBRC 101360 / PT) (Methanosaeta thermophila) protein is Valine--tRNA ligase.